Here is a 559-residue protein sequence, read N- to C-terminus: DNA ligase (559 aa).

E231 contacts ATP. Catalysis depends on K233, which acts as the N6-AMP-lysine intermediate. Residues R238 and E285 each coordinate ATP. The Mg(2+) site is built by E285 and E379. Residues K384 and K399 each contribute to the ATP site.

This sequence belongs to the ATP-dependent DNA ligase family. Interacts with host TOP2A and TOP2B. Requires Mg(2+) as cofactor.

It localises to the host cytoplasm. It carries out the reaction ATP + (deoxyribonucleotide)n-3'-hydroxyl + 5'-phospho-(deoxyribonucleotide)m = (deoxyribonucleotide)n+m + AMP + diphosphate.. Its function is as follows. DNA ligase that seals nicks in double-stranded DNA during DNA replication, DNA recombination and DNA repair. Recruits cellular topoisomerase II to sites of viral replication and assembly. The polypeptide is DNA ligase (OPG180) (Monkeypox virus).